Consider the following 121-residue polypeptide: Neuropeptide-like protein 7 (121 aa).

The N-terminal stretch at 1 to 22 (MYIKAALLIVVLFGVASQITSA) is a signal peptide.

May regulate lifespan in response to food availability and oxidative stress. The chain is Neuropeptide-like protein 7 from Caenorhabditis elegans.